An 839-amino-acid chain; its full sequence is Sodium/hydrogen exchanger 3 (839 aa).

Residues methionine 1 to glycine 32 form the signal peptide. Residues valine 33–histidine 56 are Extracellular-facing. A helical transmembrane segment spans residues valine 57–leucine 79. The Cytoplasmic segment spans residues serine 80–valine 87. The helical transmembrane segment at proline 88–alanine 107 threads the bilayer. The Extracellular segment spans residues aspartate 108–threonine 116. Residues proline 117–tyrosine 134 form a helical membrane-spanning segment. At phenylalanine 135–proline 137 the chain is on the cytoplasmic side. The helical transmembrane segment at asparagine 138–serine 173 threads the bilayer. A 1,2-diacyl-sn-glycero-3-phospho-(1D-myo-inositol) is bound by residues glycine 143, glycine 146, and threonine 147. Topologically, residues glycine 174–phenylalanine 186 are extracellular. The chain crosses the membrane as a helical span at residues leucine 187–valine 208. Topologically, residues histidine 209–valine 210 are cytoplasmic. The chain crosses the membrane as a helical span at residues asparagine 211–leucine 242. Over glycine 243–glycine 249 the chain is Extracellular. Residues valine 250 to threonine 284 traverse the membrane as a helical segment. Over lysine 285 to histidine 286 the chain is Cytoplasmic. Residues valine 287–leucine 309 form a helical membrane-spanning segment. Over serine 310–leucine 311 the chain is Extracellular. Residues serine 312–valine 328 form a helical membrane-spanning segment. Residues lysine 329–glutamine 335 are Cytoplasmic-facing. Residues serine 336–valine 364 traverse the membrane as a helical segment. The Extracellular portion of the chain corresponds to aspartate 365–asparagine 372. A helical membrane pass occupies residues threonine 373–glutamine 394. The Cytoplasmic segment spans residues threonine 395–glutamate 407. Methionine 403 is a binding site for a 1,2-diacyl-sn-glycero-3-phospho-(1D-myo-inositol). The chain crosses the membrane as a helical span at residues isoleucine 408 to leucine 431. At aspartate 432–glutamate 438 the chain is on the extracellular side. The helical transmembrane segment at lysine 439–lysine 472 threads the bilayer. Over serine 473–methionine 839 the chain is Cytoplasmic. Residues glutamine 502, isoleucine 503, and histidine 505 each coordinate a 1,2-diacyl-sn-glycero-3-phospho-(1D-myo-inositol). 2 positions are modified to phosphoserine: serine 560 and serine 568. Residues arginine 581–glutamate 595 form an interaction with EZR region. The interval asparagine 596 to threonine 673 is interaction with NHERF4. Residues valine 597–proline 701 are interaction with AHCYL1. Residues serine 598 and serine 613 each carry the phosphoserine modification. Serine 669 is subject to Phosphoserine; by SGK1. Basic residues predominate over residues lysine 688–asparagine 697. Positions lysine 688 to proline 710 are disordered. 3 positions are modified to phosphoserine: serine 724, serine 815, and serine 818.

The protein belongs to the monovalent cation:proton antiporter 1 (CPA1) transporter (TC 2.A.36) family. Homodimer. Found in the forms of complex and dynamic macromolecular complexes. Binds NHERF1 and NHERF2. Interacts with CHP1, CHP2 and SHANK2. Interacts with NHERF4 and interactions decrease in response to elevated calcium ion levels. Interacts with PDZK1 (via C-terminal PDZ domain). Interacts with AHCYL1; the interaction is required for SLC9A3 activity. Interacts with EZR; interaction targets SLC9A3 to the apical membrane. Interacts with SNX27 (via PDZ domains); directs SLC9A3 membrane insertion from early endosomes to the plasma membrane. Post-translationally, phosphorylated by PKA, which inhibits activity. Phosphorylation at Ser-669 by SGK1 is associated with increased abundance at the cell membrane.

It is found in the apical cell membrane. The protein resides in the cell membrane. Its subcellular location is the recycling endosome membrane. The protein localises to the early endosome membrane. The enzyme catalyses Na(+)(in) + H(+)(out) = Na(+)(out) + H(+)(in). Seems to switch between active and inactive modes in response to various stimuli. Activated directly or indirectly by membrane phosphatidylinositol (PIs). Regulated by a variety of auxiliary proteins, which facilitate the maturation, cell surface expression and function of the transporter. Inhibited specifically by the drug tenapanor. Plasma membrane Na(+)/H(+) antiporter. Exchanges intracellular H(+) ions for extracellular Na(+) in 1:1 stoichiometry, playing a key role in salt and fluid absorption and pH homeostasis. Major apical Na(+)/H(+) exchanger in kidney and intestine playing an important role in renal and intestine Na(+) absorption and blood pressure regulation. The sequence is that of Sodium/hydrogen exchanger 3 (SLC9A3) from Didelphis virginiana (North American opossum).